A 245-amino-acid chain; its full sequence is Carbohydrate deacetylase 1 (245 aa).

Positions 59 and 125 each coordinate Mg(2+).

This sequence belongs to the YdjC deacetylase family. Homodimer. Mg(2+) is required as a cofactor.

Its function is as follows. Probably catalyzes the deacetylation of acetylated carbohydrates an important step in the degradation of oligosaccharides. This Listeria innocua serovar 6a (strain ATCC BAA-680 / CLIP 11262) protein is Carbohydrate deacetylase 1.